Here is a 137-residue protein sequence, read N- to C-terminus: Nucleoside diphosphate kinase (137 aa).

The ATP site is built by K9, F57, R85, T91, R102, and N112. The active-site Pros-phosphohistidine intermediate is H115.

It belongs to the NDK family. Homotetramer. Requires Mg(2+) as cofactor.

Its subcellular location is the cytoplasm. The catalysed reaction is a 2'-deoxyribonucleoside 5'-diphosphate + ATP = a 2'-deoxyribonucleoside 5'-triphosphate + ADP. The enzyme catalyses a ribonucleoside 5'-diphosphate + ATP = a ribonucleoside 5'-triphosphate + ADP. Functionally, major role in the synthesis of nucleoside triphosphates other than ATP. The ATP gamma phosphate is transferred to the NDP beta phosphate via a ping-pong mechanism, using a phosphorylated active-site intermediate. This is Nucleoside diphosphate kinase from Thermus thermophilus (strain ATCC 27634 / DSM 579 / HB8).